The following is a 594-amino-acid chain: (-)-endo-fenchol synthase, chloroplastic (594 aa).

The N-terminal 50 residues, 1 to 50 (MSSLVMHVGIVNKPAITYLPTLSRRASNLHNVSSTRLQTSCSLQLDYKPV), are a transit peptide targeting the chloroplast. Residues aspartate 348, aspartate 352, aspartate 492, and glutamate 500 each contribute to the Mg(2+) site. The short motif at 348–352 (DDIYD) is the DDXXD motif element.

It belongs to the terpene synthase family. Tpsa subfamily. Requires Mg(2+) as cofactor. Mn(2+) serves as cofactor. Expressed at low levels in leaves.

It is found in the plastid. The protein localises to the chloroplast. The catalysed reaction is (2E)-geranyl diphosphate = alpha-pinene + diphosphate. It catalyses the reaction (2E)-geranyl diphosphate + H2O = (1S,2S,4R)-endo-fenchol + diphosphate. It carries out the reaction (2E)-geranyl diphosphate = limonene + diphosphate. The protein operates within secondary metabolite biosynthesis; terpenoid biosynthesis. Monoterpene synthase involved in the biosynthesis of volatile compounds widely used in aromatherapy and folk medicine, and present in culinary herbs. Mediates the conversion of (2E)-geranyl diphosphate (GPP) into alpha fenchol, limonene and alpha-pinene and, as minor compounds, into beta-myrcene, alpha-terpinolene and alpha-phellandrene. The protein is (-)-endo-fenchol synthase, chloroplastic of Lavandula stoechas (Butterfly lavender).